A 136-amino-acid chain; its full sequence is Histone H3.1 (136 aa).

A disordered region spans residues 1–43; sequence MARTKQTARKSTGGKAPRKQLATKAARKSAPATGGVKKPHRYR. Asymmetric dimethylarginine; by PRMT6; alternate is present on arginine 3. Arginine 3 is modified (citrulline; alternate). Threonine 4 bears the Phosphothreonine; by HASPIN and VRK1 mark. Lysine 5 bears the Allysine; alternate mark. At lysine 5 the chain carries N6,N6,N6-trimethyllysine; alternate. Lysine 5 carries the N6,N6-dimethyllysine; alternate modification. Lysine 5 carries the post-translational modification N6-(2-hydroxyisobutyryl)lysine; alternate. Lysine 5 bears the N6-(beta-hydroxybutyryl)lysine; alternate mark. At lysine 5 the chain carries N6-acetyllysine; alternate. The residue at position 5 (lysine 5) is an N6-crotonyllysine; alternate. Lysine 5 carries the post-translational modification N6-methyllysine; alternate. 5-glutamyl dopamine; alternate is present on glutamine 6. Glutamine 6 bears the 5-glutamyl serotonin; alternate mark. Threonine 7 is subject to Phosphothreonine; by PKC. Residue arginine 9 is modified to Citrulline; alternate. At arginine 9 the chain carries Symmetric dimethylarginine; by PRMT5; alternate. Position 10 is an N6,N6,N6-trimethyllysine; alternate (lysine 10). The residue at position 10 (lysine 10) is an N6,N6-dimethyllysine; alternate. Lysine 10 is modified (N6-(2-hydroxyisobutyryl)lysine; alternate). Lysine 10 carries the N6-(beta-hydroxybutyryl)lysine; alternate modification. Lysine 10 carries the N6-acetyllysine; alternate modification. Position 10 is an N6-crotonyllysine; alternate (lysine 10). The residue at position 10 (lysine 10) is an N6-methyllysine; alternate. Lysine 10 carries the N6-butyryllysine; alternate modification. Position 10 is an N6-lactoyllysine; alternate (lysine 10). At serine 11 the chain carries ADP-ribosylserine; alternate. Serine 11 bears the Phosphoserine; alternate; by AURKB, AURKC, RPS6KA3, RPS6KA4 and RPS6KA5 mark. Position 12 is a phosphothreonine; by PKC and CHEK1 (threonine 12). Lysine 15 is subject to N6-(2-hydroxyisobutyryl)lysine; alternate. N6-(beta-hydroxybutyryl)lysine; alternate is present on lysine 15. At lysine 15 the chain carries N6-acetyllysine; alternate. Position 15 is an N6-lactoyllysine; alternate (lysine 15). Lysine 15 carries the N6-glutaryllysine; alternate modification. Lysine 15 carries the post-translational modification N6-succinyllysine; alternate. Position 18 is a citrulline; alternate (arginine 18). Residue arginine 18 is modified to Asymmetric dimethylarginine; by CARM1; alternate. N6-(2-hydroxyisobutyryl)lysine; alternate is present on residues lysine 19 and lysine 24. N6-(beta-hydroxybutyryl)lysine; alternate occurs at positions 19 and 24. An N6-acetyllysine; alternate mark is found at lysine 19 and lysine 24. N6-crotonyllysine; alternate occurs at positions 19 and 24. Lysine 19 and lysine 24 each carry N6-methyllysine; alternate. Residues lysine 19 and lysine 24 each carry the N6-butyryllysine; alternate modification. An N6-lactoyllysine; alternate mark is found at lysine 19 and lysine 24. N6-glutaryllysine; alternate occurs at positions 19 and 24. Lysine 19 carries N6-decanoyllysine lipidation. A Citrulline modification is found at arginine 27. Residue lysine 28 is modified to N6,N6,N6-trimethyllysine; alternate. Lysine 28 is subject to N6,N6-dimethyllysine; alternate. Lysine 28 carries the post-translational modification N6-(2-hydroxyisobutyryl)lysine; alternate. Residue lysine 28 is modified to N6-(beta-hydroxybutyryl)lysine; alternate. Lysine 28 bears the N6-acetyllysine; alternate mark. At lysine 28 the chain carries N6-crotonyllysine; alternate. At lysine 28 the chain carries N6-methyllysine; alternate. At lysine 28 the chain carries N6-lactoyllysine; alternate. Lysine 28 is modified (N6-glutaryllysine; alternate). Serine 29 bears the ADP-ribosylserine; alternate mark. Serine 29 is subject to Phosphoserine; alternate; by AURKB, AURKC and RPS6KA5. Residue lysine 37 is modified to N6,N6,N6-trimethyllysine; alternate. Lysine 37 is modified (N6,N6-dimethyllysine; alternate). An N6-(2-hydroxyisobutyryl)lysine; alternate modification is found at lysine 37. Lysine 37 bears the N6-acetyllysine; alternate mark. An N6-methyllysine; alternate modification is found at lysine 37. Lysine 38 carries the N6-methyllysine modification. Tyrosine 42 is subject to Phosphotyrosine. N6,N6,N6-trimethyllysine; alternate is present on lysine 57. Lysine 57 is subject to N6-(2-hydroxyisobutyryl)lysine; alternate. Lysine 57 bears the N6-(beta-hydroxybutyryl)lysine; alternate mark. Lysine 57 is modified (N6-acetyllysine; alternate). At lysine 57 the chain carries N6-crotonyllysine; alternate. Lysine 57 bears the N6-lactoyllysine; alternate mark. Lysine 57 carries the N6-glutaryllysine; alternate modification. Lysine 57 is subject to N6-succinyllysine; alternate. Lysine 57 is subject to N6-methyllysine; by EHMT2; alternate. Serine 58 bears the Phosphoserine mark. An N6-(2-hydroxyisobutyryl)lysine; alternate mark is found at lysine 65 and lysine 80. Residues lysine 65 and lysine 80 each carry the N6-methyllysine; alternate modification. Lysine 80 is subject to N6,N6,N6-trimethyllysine; alternate. Lysine 80 carries the N6,N6-dimethyllysine; alternate modification. The residue at position 80 (lysine 80) is an N6-(beta-hydroxybutyryl)lysine; alternate. An N6-acetyllysine; alternate modification is found at lysine 80. Position 80 is an N6-lactoyllysine; alternate (lysine 80). The residue at position 80 (lysine 80) is an N6-glutaryllysine; alternate. Lysine 80 carries the N6-succinyllysine; alternate modification. Threonine 81 bears the Phosphothreonine mark. A Phosphoserine modification is found at serine 87. Threonine 108 carries the phosphothreonine modification. 2 positions are modified to N6-acetyllysine; alternate: lysine 116 and lysine 123. N6-glutaryllysine; alternate is present on residues lysine 116 and lysine 123. Position 123 is an N6-(2-hydroxyisobutyryl)lysine; alternate (lysine 123). At lysine 123 the chain carries N6-(beta-hydroxybutyryl)lysine; alternate. N6-methyllysine; alternate is present on lysine 123. Lysine 123 bears the N6-succinyllysine; alternate mark.

It belongs to the histone H3 family. The nucleosome is a histone octamer containing two molecules each of H2A, H2B, H3 and H4 assembled in one H3-H4 heterotetramer and two H2A-H2B heterodimers. The octamer wraps approximately 147 bp of DNA. Interacts with TONSL; CHAF1A; CHAF1B; MCM2 and DNAJC9. Interacts with NASP; NASP is a histone chaperone that stabilizes and maintains a soluble pool of Histone H3-H4 dimers. Post-translationally, acetylation is generally linked to gene activation. Acetylation on Lys-10 (H3K9ac) impairs methylation at Arg-9 (H3R8me2s). Acetylation on Lys-19 (H3K18ac) and Lys-24 (H3K24ac) favors methylation at Arg-18 (H3R17me). Acetylation at Lys-123 (H3K122ac) by EP300/p300 plays a central role in chromatin structure: localizes at the surface of the histone octamer and stimulates transcription, possibly by promoting nucleosome instability. Citrullination at Arg-9 (H3R8ci) and/or Arg-18 (H3R17ci) by PADI4 impairs methylation and represses transcription. In terms of processing, asymmetric dimethylation at Arg-18 (H3R17me2a) by CARM1 is linked to gene activation. Symmetric dimethylation at Arg-9 (H3R8me2s) by PRMT5 is linked to gene repression. Asymmetric dimethylation at Arg-3 (H3R2me2a) by PRMT6 is linked to gene repression and is mutually exclusive with H3 Lys-5 methylation (H3K4me2 and H3K4me3). H3R2me2a is present at the 3' of genes regardless of their transcription state and is enriched on inactive promoters, while it is absent on active promoters. Post-translationally, methylation at Lys-5 (H3K4me), Lys-37 (H3K36me) and Lys-80 (H3K79me) are linked to gene activation. Methylation at Lys-5 (H3K4me) facilitates subsequent acetylation of H3 and H4. Methylation at Lys-80 (H3K79me) is associated with DNA double-strand break (DSB) responses and is a specific target for TP53BP1. Methylation at Lys-10 (H3K9me) and Lys-28 (H3K27me) are linked to gene repression. Methylation at Lys-10 (H3K9me) is a specific target for HP1 proteins (CBX1, CBX3 and CBX5) and prevents subsequent phosphorylation at Ser-11 (H3S10ph) and acetylation of H3 and H4. Methylation at Lys-5 (H3K4me) and Lys-80 (H3K79me) require preliminary monoubiquitination of H2B at 'Lys-120'. Methylation at Lys-10 (H3K9me) and Lys-28 (H3K27me) are enriched in inactive X chromosome chromatin. Monomethylation at Lys-57 (H3K56me1) by EHMT2/G9A in G1 phase promotes interaction with PCNA and is required for DNA replication. Phosphorylated at Thr-4 (H3T3ph) by VRK1. Phosphorylated at Thr-4 (H3T3ph) by HASPIN during prophase and dephosphorylated during anaphase. Phosphorylation at Ser-11 (H3S10ph) by AURKB is crucial for chromosome condensation and cell-cycle progression during mitosis and meiosis. In addition phosphorylation at Ser-11 (H3S10ph) by RPS6KA4 and RPS6KA5 is important during interphase because it enables the transcription of genes following external stimulation, like mitogens, stress, growth factors or UV irradiation and result in the activation of genes, such as c-fos and c-jun. Phosphorylation at Ser-11 (H3S10ph), which is linked to gene activation, prevents methylation at Lys-10 (H3K9me) but facilitates acetylation of H3 and H4. Phosphorylation at Ser-11 (H3S10ph) by AURKB mediates the dissociation of HP1 proteins (CBX1, CBX3 and CBX5) from heterochromatin. Phosphorylation at Ser-11 (H3S10ph) is also an essential regulatory mechanism for neoplastic cell transformation. Phosphorylated at Ser-29 (H3S28ph) by MAP3K20 isoform 1, RPS6KA5 or AURKB during mitosis or upon ultraviolet B irradiation. Phosphorylation at Thr-7 (H3T6ph) by PRKCB is a specific tag for epigenetic transcriptional activation that prevents demethylation of Lys-5 (H3K4me) by LSD1/KDM1A. At centromeres, specifically phosphorylated at Thr-12 (H3T11ph) from prophase to early anaphase, by DAPK3 and PKN1. Phosphorylation at Thr-12 (H3T11ph) by PKN1 or isoform M2 of PKM (PKM2) is a specific tag for epigenetic transcriptional activation that promotes demethylation of Lys-10 (H3K9me) by KDM4C/JMJD2C. Phosphorylation at Thr-12 (H3T11ph) by chromatin-associated CHEK1 regulates the transcription of cell cycle regulatory genes by modulating acetylation of Lys-10 (H3K9ac). Phosphorylation at Tyr-42 (H3Y41ph) by JAK2 promotes exclusion of CBX5 (HP1 alpha) from chromatin. In terms of processing, monoubiquitinated by RAG1 in lymphoid cells, monoubiquitination is required for V(D)J recombination. Ubiquitinated by the CUL4-DDB-RBX1 complex in response to ultraviolet irradiation. This may weaken the interaction between histones and DNA and facilitate DNA accessibility to repair proteins. Post-translationally, lysine deamination at Lys-5 (H3K4all) to form allysine is mediated by LOXL2. Allysine formation by LOXL2 only takes place on H3K4me3 and results in gene repression. Crotonylation (Kcr) is specifically present in male germ cells and marks testis-specific genes in post-meiotic cells, including X-linked genes that escape sex chromosome inactivation in haploid cells. Crotonylation marks active promoters and enhancers and confers resistance to transcriptional repressors. It is also associated with post-meiotically activated genes on autosomes. In terms of processing, butyrylation of histones marks active promoters and competes with histone acetylation. It is present during late spermatogenesis. Post-translationally, succinylation at Lys-80 (H3K79succ) by KAT2A takes place with a maximum frequency around the transcription start sites of genes. It gives a specific tag for epigenetic transcription activation. Desuccinylation at Lys-123 (H3K122succ) by SIRT7 in response to DNA damage promotes chromatin condensation and double-strand breaks (DSBs) repair. Serine ADP-ribosylation by PARP1 or PARP2 constitutes the primary form of ADP-ribosylation of proteins in response to DNA damage. Serine ADP-ribosylation at Ser-11 (H3S10ADPr) promotes recruitment of CHD1L. H3S10ADPr is mutually exclusive with phosphorylation at Ser-11 (H3S10ph) and impairs acetylation at Lys-10 (H3K9ac). In terms of processing, serotonylated by TGM2 at Gln-6 (H3Q5ser) during serotonergic neuron differentiation. H3Q5ser is associated with trimethylation of Lys-5 (H3K4me3) and enhances general transcription factor IID (TFIID) complex-binding to H3K4me3, thereby facilitating transcription. Post-translationally, dopaminylated by TGM2 at Gln-6 (H3Q5dop) in ventral tegmental area (VTA) neurons. H3Q5dop mediates neurotransmission-independent role of nuclear dopamine by regulating relapse-related transcriptional plasticity in the reward system. Lactylated in macrophages by EP300/P300 by using lactoyl-CoA directly derived from endogenous or exogenous lactate, leading to stimulates gene transcription.

The protein localises to the nucleus. It localises to the chromosome. Its function is as follows. Core component of nucleosome. Nucleosomes wrap and compact DNA into chromatin, limiting DNA accessibility to the cellular machineries which require DNA as a template. Histones thereby play a central role in transcription regulation, DNA repair, DNA replication and chromosomal stability. DNA accessibility is regulated via a complex set of post-translational modifications of histones, also called histone code, and nucleosome remodeling. This chain is Histone H3.1, found in Homo sapiens (Human).